We begin with the raw amino-acid sequence, 135 residues long: ATP synthase epsilon chain (135 aa).

It belongs to the ATPase epsilon chain family. As to quaternary structure, F-type ATPases have 2 components, CF(1) - the catalytic core - and CF(0) - the membrane proton channel. CF(1) has five subunits: alpha(3), beta(3), gamma(1), delta(1), epsilon(1). CF(0) has three main subunits: a, b and c.

It localises to the cell inner membrane. Functionally, produces ATP from ADP in the presence of a proton gradient across the membrane. The chain is ATP synthase epsilon chain from Bradyrhizobium sp. (strain BTAi1 / ATCC BAA-1182).